The sequence spans 293 residues: Ribosomal RNA small subunit methyltransferase A (293 aa).

S-adenosyl-L-methionine contacts are provided by Asn33, Val35, Gly60, Glu81, Asp111, and Asn130.

Belongs to the class I-like SAM-binding methyltransferase superfamily. rRNA adenine N(6)-methyltransferase family. RsmA subfamily.

It is found in the cytoplasm. It carries out the reaction adenosine(1518)/adenosine(1519) in 16S rRNA + 4 S-adenosyl-L-methionine = N(6)-dimethyladenosine(1518)/N(6)-dimethyladenosine(1519) in 16S rRNA + 4 S-adenosyl-L-homocysteine + 4 H(+). Functionally, specifically dimethylates two adjacent adenosines (A1518 and A1519) in the loop of a conserved hairpin near the 3'-end of 16S rRNA in the 30S particle. May play a critical role in biogenesis of 30S subunits. In Corynebacterium glutamicum (strain R), this protein is Ribosomal RNA small subunit methyltransferase A.